The sequence spans 264 residues: Acyl-[acyl-carrier-protein]--UDP-N-acetylglucosamine O-acyltransferase (264 aa).

This sequence belongs to the transferase hexapeptide repeat family. LpxA subfamily. In terms of assembly, homotrimer.

The protein resides in the cytoplasm. The enzyme catalyses a (3R)-hydroxyacyl-[ACP] + UDP-N-acetyl-alpha-D-glucosamine = a UDP-3-O-[(3R)-3-hydroxyacyl]-N-acetyl-alpha-D-glucosamine + holo-[ACP]. It participates in glycolipid biosynthesis; lipid IV(A) biosynthesis; lipid IV(A) from (3R)-3-hydroxytetradecanoyl-[acyl-carrier-protein] and UDP-N-acetyl-alpha-D-glucosamine: step 1/6. Functionally, involved in the biosynthesis of lipid A, a phosphorylated glycolipid that anchors the lipopolysaccharide to the outer membrane of the cell. The chain is Acyl-[acyl-carrier-protein]--UDP-N-acetylglucosamine O-acyltransferase from Chlorobaculum tepidum (strain ATCC 49652 / DSM 12025 / NBRC 103806 / TLS) (Chlorobium tepidum).